A 142-amino-acid chain; its full sequence is MEKKVYYSIVSSTRFSRNEENRTIIEDNIKKGENHFLIRNDDYGECFEVDFEKNITEEENENWILEAVIDFAKKYRITEFELWKKHEGDSTYDKGFGIVIEGSMDNPILKFKEVYSGSLDDWNITWGKGKQTYEKIYFKLAL.

This is an uncharacterized protein from Bacillus anthracis.